The primary structure comprises 243 residues: 1-(5-phosphoribosyl)-5-[(5-phosphoribosylamino)methylideneamino] imidazole-4-carboxamide isomerase (243 aa).

Asp-8 functions as the Proton acceptor in the catalytic mechanism. Asp-130 acts as the Proton donor in catalysis.

Belongs to the HisA/HisF family.

The protein resides in the cytoplasm. The catalysed reaction is 1-(5-phospho-beta-D-ribosyl)-5-[(5-phospho-beta-D-ribosylamino)methylideneamino]imidazole-4-carboxamide = 5-[(5-phospho-1-deoxy-D-ribulos-1-ylimino)methylamino]-1-(5-phospho-beta-D-ribosyl)imidazole-4-carboxamide. It participates in amino-acid biosynthesis; L-histidine biosynthesis; L-histidine from 5-phospho-alpha-D-ribose 1-diphosphate: step 4/9. This is 1-(5-phosphoribosyl)-5-[(5-phosphoribosylamino)methylideneamino] imidazole-4-carboxamide isomerase from Acinetobacter baumannii (strain AB307-0294).